Consider the following 270-residue polypeptide: NADPH-dependent 7-cyano-7-deazaguanine reductase (270 aa).

79-81 (IES) lines the substrate pocket. Position 81 to 82 (81 to 82 (SK)) interacts with NADPH. The active-site Thioimide intermediate is the C177. Catalysis depends on D184, which acts as the Proton donor. 216–217 (HE) provides a ligand contact to substrate. 245 to 246 (RG) contributes to the NADPH binding site.

This sequence belongs to the GTP cyclohydrolase I family. QueF type 2 subfamily. Homodimer.

It localises to the cytoplasm. The enzyme catalyses 7-aminomethyl-7-carbaguanine + 2 NADP(+) = 7-cyano-7-deazaguanine + 2 NADPH + 3 H(+). Its pathway is tRNA modification; tRNA-queuosine biosynthesis. Functionally, catalyzes the NADPH-dependent reduction of 7-cyano-7-deazaguanine (preQ0) to 7-aminomethyl-7-deazaguanine (preQ1). In Acinetobacter baumannii (strain ACICU), this protein is NADPH-dependent 7-cyano-7-deazaguanine reductase.